The following is a 252-amino-acid chain: Imidazole glycerol phosphate synthase subunit HisF (252 aa).

Residues aspartate 11 and aspartate 130 contribute to the active site.

The protein belongs to the HisA/HisF family. In terms of assembly, heterodimer of HisH and HisF.

The protein resides in the cytoplasm. The catalysed reaction is 5-[(5-phospho-1-deoxy-D-ribulos-1-ylimino)methylamino]-1-(5-phospho-beta-D-ribosyl)imidazole-4-carboxamide + L-glutamine = D-erythro-1-(imidazol-4-yl)glycerol 3-phosphate + 5-amino-1-(5-phospho-beta-D-ribosyl)imidazole-4-carboxamide + L-glutamate + H(+). It participates in amino-acid biosynthesis; L-histidine biosynthesis; L-histidine from 5-phospho-alpha-D-ribose 1-diphosphate: step 5/9. Its function is as follows. IGPS catalyzes the conversion of PRFAR and glutamine to IGP, AICAR and glutamate. The HisF subunit catalyzes the cyclization activity that produces IGP and AICAR from PRFAR using the ammonia provided by the HisH subunit. The chain is Imidazole glycerol phosphate synthase subunit HisF from Pelotomaculum thermopropionicum (strain DSM 13744 / JCM 10971 / SI).